Reading from the N-terminus, the 298-residue chain is 33 kDa chaperonin (298 aa).

Intrachain disulfides connect C239-C241 and C272-C275.

Belongs to the HSP33 family. Under oxidizing conditions two disulfide bonds are formed involving the reactive cysteines. Under reducing conditions zinc is bound to the reactive cysteines and the protein is inactive.

The protein resides in the cytoplasm. Functionally, redox regulated molecular chaperone. Protects both thermally unfolding and oxidatively damaged proteins from irreversible aggregation. Plays an important role in the bacterial defense system toward oxidative stress. The chain is 33 kDa chaperonin from Picosynechococcus sp. (strain ATCC 27264 / PCC 7002 / PR-6) (Agmenellum quadruplicatum).